The primary structure comprises 112 residues: uncharacterized protein (112 aa).

This is an uncharacterized protein from Dictyostelium discoideum (Social amoeba).